Here is a 126-residue protein sequence, read N- to C-terminus: Aspartate 1-decarboxylase (126 aa).

The active-site Schiff-base intermediate with substrate; via pyruvic acid is S25. S25 bears the Pyruvic acid (Ser) mark. Residue T57 participates in substrate binding. The active-site Proton donor is the Y58. Substrate is bound at residue 72 to 74; that stretch reads GAT.

It belongs to the PanD family. In terms of assembly, heterooctamer of four alpha and four beta subunits. It depends on pyruvate as a cofactor. Post-translationally, is synthesized initially as an inactive proenzyme, which is activated by self-cleavage at a specific serine bond to produce a beta-subunit with a hydroxyl group at its C-terminus and an alpha-subunit with a pyruvoyl group at its N-terminus.

It is found in the cytoplasm. It carries out the reaction L-aspartate + H(+) = beta-alanine + CO2. It functions in the pathway cofactor biosynthesis; (R)-pantothenate biosynthesis; beta-alanine from L-aspartate: step 1/1. Its function is as follows. Catalyzes the pyruvoyl-dependent decarboxylation of aspartate to produce beta-alanine. The protein is Aspartate 1-decarboxylase of Campylobacter jejuni subsp. doylei (strain ATCC BAA-1458 / RM4099 / 269.97).